We begin with the raw amino-acid sequence, 152 residues long: Natriuretic peptides A (152 aa).

The first 24 residues, M1 to A24, serve as a signal peptide directing secretion. 2 consecutive propeptides follow at residues N25–R122 and E92–E102. The interval P58–W101 is disordered. A Phosphoserine modification is found at S128. C129 and C145 form a disulfide bridge. Positions N146–Y150 are important for degradation of atrial natriuretic peptide by IDE.

The protein belongs to the natriuretic peptide family. In terms of assembly, homodimer; disulfide-linked antiparallel dimer. The precursor molecule is proteolytically cleaved by CORIN at Arg-122 to produce the atrial natriuretic peptide. Undergoes further proteolytic cleavage by unknown proteases to give rise to long-acting natriuretic peptide, vessel dilator and kaliuretic peptide. Additional processing gives rise to the auriculin and atriopeptin peptides. In the kidneys, alternative processing by an unknown protease results in the peptide urodilatin. Post-translationally, cleavage by MME initiates degradation of the factor and thereby regulates its activity. Degradation by IDE results in reduced activation of NPR1 (in vitro). During IDE degradation, the resulting products can temporarily stimulate NPR2 to produce cGMP, before the fragments are completely degraded and inactivated by IDE (in vitro). In terms of processing, degraded by IDE. Phosphorylation on Ser-128 decreases vasorelaxant activity.

It localises to the secreted. The protein localises to the perikaryon. It is found in the cell projection. Hormone that plays a key role in mediating cardio-renal homeostasis, and is involved in vascular remodeling and regulating energy metabolism. Acts by specifically binding and stimulating NPR1 to produce cGMP, which in turn activates effector proteins, such as PRKG1, that drive various biological responses. Regulates vasodilation, natriuresis, diuresis and aldosterone synthesis and is therefore essential for regulating blood pressure, controlling the extracellular fluid volume and maintaining the fluid-electrolyte balance. Also involved in inhibiting cardiac remodeling and cardiac hypertrophy by inducing cardiomyocyte apoptosis and attenuating the growth of cardiomyocytes and fibroblasts. Plays a role in female pregnancy by promoting trophoblast invasion and spiral artery remodeling in uterus, and thus prevents pregnancy-induced hypertension. In adipose tissue, acts in various cGMP- and PKG-dependent pathways to regulate lipid metabolism and energy homeostasis. This includes up-regulating lipid metabolism and mitochondrial oxygen utilization by activating the AMP-activated protein kinase (AMPK), and increasing energy expenditure by acting via MAPK11 to promote the UCP1-dependent thermogenesis of brown adipose tissue. Binds the clearance receptor NPR3 which removes the hormone from circulation. Functionally, may have a role in cardio-renal homeostasis through regulation of natriuresis, diuresis, vasodilation, and inhibiting aldosterone synthesis. In vitro, promotes the production of cGMP and induces vasodilation. May promote natriuresis, at least in part, by enhancing prostaglandin E2 synthesis resulting in the inhibition of renal Na+-K+-ATPase. However reports on the involvement of this peptide in mammal blood volume and blood pressure homeostasis are conflicting; according to a report, in vivo it is not sufficient to activate cGMP and does not inhibit collecting duct transport nor effect diuresis and natriuresis. Appears to bind to specific receptors that are distinct from the receptors bound by atrial natriuretic peptide and vessel dilator. Possibly enhances protein excretion in urine by decreasing proximal tubular protein reabsorption. In terms of biological role, may have a role in cardio-renal homeostasis through regulation of natriuresis, diuresis, and vasodilation. In vitro, promotes the production of cGMP and induces vasodilation. May promote natriuresis, at least in part, by enhancing prostaglandin E2 synthesis resulting in the inhibition of renal Na+-K+-ATPase. However reports on the involvement of this peptide in mammal blood volume and blood pressure homeostasis are conflicting; according to a report it is not sufficient to activate cGMP and does not inhibit collecting duct transport nor effect diuresis and natriuresis. Appears to bind to specific receptors that are distinct from the receptors bound by the atrial natriuretic and long-acting natriuretic peptides. Possibly functions in protein excretion in urine by maintaining the integrity of the proximal tubules and enhancing protein excretion by decreasing proximal tubular protein reabsorption. Its function is as follows. May have a role in cardio-renal homeostasis through regulation of diuresis and inhibiting aldosterone synthesis. In vitro, promotes the production of cGMP and induces vasodilation. May promote natriuresis, at least in part, by enhancing prostaglandin E2 synthesis resulting in the inhibition of renal Na+-K+-ATPase. May have a role in potassium excretion but not sodium excretion (natriuresis). Possibly enhances protein excretion in urine by decreasing proximal tubular protein reabsorption. Hormone produced in the kidneys that appears to be important for maintaining cardio-renal homeostasis. Mediates vasodilation, natriuresis and diuresis primarily in the renal system, in order to maintain the extracellular fluid volume and control the fluid-electrolyte balance. Specifically binds and stimulates cGMP production by renal transmembrane receptors, likely NPR1. Urodilatin not ANP, may be the natriuretic peptide responsible for the regulation of sodium and water homeostasis in the kidney. Functionally, may have a role in cardio-renal homeostasis through regulation of natriuresis and vasodilation. In vivo promotes natriuresis and in vitro, vasodilates renal artery strips. In terms of biological role, may have a role in cardio-renal homeostasis through regulation of regulation of natriuresis and vasodilation. In vivo promotes natriuresis. In vitro, vasodilates intestinal smooth muscle but not smooth muscle strips. Its function is as follows. May have a role in cardio-renal homeostasis through regulation of natriuresis and vasodilation. In vivo promotes natriuresis. In vitro, selectively vasodilates intestinal and vascular smooth muscle strips. May have a role in cardio-renal homeostasis through regulation of natriuresis and vasodilation. In vivo promotes natriuresis. In vitro, selectively vasodilates intestinal smooth muscle but not vascular smooth muscle strips. The protein is Natriuretic peptides A (NPPA) of Bos taurus (Bovine).